We begin with the raw amino-acid sequence, 284 residues long: F-box protein PP2-B13 (284 aa).

Residues 1 to 44 form the F-box domain; the sequence is MMMLPEACVANILAFTSPADAFSSSEVSSVFRLAGDSDFVWEKF.

In Arabidopsis thaliana (Mouse-ear cress), this protein is F-box protein PP2-B13 (PP2B13).